A 148-amino-acid polypeptide reads, in one-letter code: Single-stranded DNA-binding protein, mitochondrial (148 aa).

The N-terminal 16 residues, Met1–His16, are a transit peptide targeting the mitochondrion. The SSB domain maps to Leu30–Ser141. A phosphoserine mark is found at Ser67 and Ser79. N6-acetyllysine is present on Lys113. An N6-succinyllysine modification is found at Lys122.

In terms of assembly, homotetramer. Interacts with MPG/AAG, through inhibition of its glycosylase activity it potentially prevents formation of DNA breaks in ssDNA, ensuring that base removal primarily occurs in dsDNA. Interacts with POLDIP2. Interacts with PRIMPOL.

It is found in the mitochondrion. The protein resides in the mitochondrion matrix. The protein localises to the mitochondrion nucleoid. Its function is as follows. Binds preferentially and cooperatively to pyrimidine rich single-stranded DNA (ss-DNA). In vitro, required to maintain the copy number of mitochondrial DNA (mtDNA) and plays a crucial role during mtDNA replication by stimulating the activity of the replisome components POLG and TWNK at the replication fork. Promotes the activity of the gamma complex polymerase POLG, largely by organizing the template DNA and eliminating secondary structures to favor ss-DNA conformations that facilitate POLG activity. In addition it is able to promote the 5'-3' unwinding activity of the mtDNA helicase TWNK. May also function in mtDNA repair. This Pongo abelii (Sumatran orangutan) protein is Single-stranded DNA-binding protein, mitochondrial (SSBP1).